The primary structure comprises 349 residues: Biotin synthase (349 aa).

Residues 60-287 (GDVELATLLS…KARVRLSAGR (228 aa)) form the Radical SAM core domain. 3 residues coordinate [4Fe-4S] cluster: Cys-75, Cys-79, and Cys-82. [2Fe-2S] cluster contacts are provided by Cys-119, Cys-150, Cys-210, and Arg-282.

This sequence belongs to the radical SAM superfamily. Biotin synthase family. As to quaternary structure, homodimer. The cofactor is [4Fe-4S] cluster. [2Fe-2S] cluster serves as cofactor.

The catalysed reaction is (4R,5S)-dethiobiotin + (sulfur carrier)-SH + 2 reduced [2Fe-2S]-[ferredoxin] + 2 S-adenosyl-L-methionine = (sulfur carrier)-H + biotin + 2 5'-deoxyadenosine + 2 L-methionine + 2 oxidized [2Fe-2S]-[ferredoxin]. It participates in cofactor biosynthesis; biotin biosynthesis; biotin from 7,8-diaminononanoate: step 2/2. Its function is as follows. Catalyzes the conversion of dethiobiotin (DTB) to biotin by the insertion of a sulfur atom into dethiobiotin via a radical-based mechanism. This Albidiferax ferrireducens (strain ATCC BAA-621 / DSM 15236 / T118) (Rhodoferax ferrireducens) protein is Biotin synthase.